Here is a 359-residue protein sequence, read N- to C-terminus: NADPH HC-toxin reductase 2 (359 aa).

NADP(+)-binding positions include arginine 39, 67-68, 87-89, tyrosine 177, lysine 181, 206-209, and threonine 221; these read DL, VAT, and LGLV. Catalysis depends on lysine 181, which acts as the Proton donor.

The protein belongs to the NAD(P)-dependent epimerase/dehydratase family.

In tandem with Hm1, NADPH-dependent HC toxin reductase (HCTR), which inactivates HC toxin, a cyclic tetrapeptide produced by the fungus Cochliobolus carbonum to permit infection and acting as an inhibitor of host histone deacetylases (HDACs), thus conferring resistance against C.carbonum race 1 in resistant cultivars (e.g. cv. B73 and cv. Wisconsin 22). Catalyzes the production of 8-hydroxy derivative of HC-toxin via the reduction of the 8-keto group of 2-amino-9,10-epoxy-8-oxo-decanoic acid, an amino acid of the HC-toxin. This is NADPH HC-toxin reductase 2 from Zea mays (Maize).